An 899-amino-acid polypeptide reads, in one-letter code: Gamma-aminobutyric acid type B receptor subunit 1 (899 aa).

The first 19 residues, 1-19, serve as a signal peptide directing secretion; it reads MFVRSSWLLLWGTIVWASA. The Extracellular portion of the chain corresponds to 20-447; that stretch reads EPVTLHIGGT…KKHAMTVSNE (428 aa). 5 N-linked (GlcNAc...) asparagine glycosylation sites follow: asparagine 69, asparagine 266, asparagine 339, asparagine 353, and asparagine 371. A helical transmembrane segment spans residues 448–468; sequence FYYPTILFAVLGIAACVFIYL. The Cytoplasmic segment spans residues 469–487; it reads FTQKHHERLIIFQSQPECN. A helical membrane pass occupies residues 488-508; that stretch reads NILLIGCSLCLFSLFLIGLPS. At 509–525 the chain is on the extracellular side; sequence DDISISESLFPLLCHAR. A helical transmembrane segment spans residues 526–546; the sequence is VTILLFGFTFAYGSMFAKVWI. Residues 547–616 lie on the Cytoplasmic side of the membrane; sequence VHRMGATENQ…LNQPISSSKF (70 aa). The chain crosses the membrane as a helical span at residues 617 to 637; it reads YVIVAALTAVDVFVCFVWVLI. The Extracellular segment spans residues 638 to 674; sequence DPLHLTEQKFPLFTPADSEEDEMIMPVLQQCQSNQQE. A helical transmembrane segment spans residues 675 to 695; it reads VWIGIIMGFKCLLLVFGTFLS. Residues 696 to 713 lie on the Cytoplasmic side of the membrane; sequence YETRNLKLRFINDSRFVG. A helical transmembrane segment spans residues 714-734; sequence LAIYNVAVMTLVTAPVVTLLI. Topologically, residues 735 to 741 are extracellular; it reads HGKVDAN. Residues 742–762 traverse the membrane as a helical segment; the sequence is FAFISLTVLICTYISVGLIYG. At 763-899 the chain is on the cytoplasmic side; that stretch reads PKIRHIIKVP…SSTSSDEILL (137 aa). Residues 791–842 adopt a coiled-coil conformation; the sequence is KVDQKRYDMLKKENETLQIQIEEKERKIHECKERLEELTKNSETEDMNAQLL. The disordered stretch occupies residues 870–899; the sequence is DLQNGNHPGQIYENDNDDDGSSTSSDEILL. Over residues 890-899 the composition is skewed to low complexity; it reads SSTSSDEILL.

The protein belongs to the G-protein coupled receptor 3 family. As to quaternary structure, may form a heterodimer with gbb-2. As to expression, expressed in the nervous system, including cholinergic motor neurons, but not in GABAergic motor neurons or muscle.

It is found in the cell membrane. In terms of biological role, component of a heterodimeric G-protein coupled receptor for GABA, formed by gbb-1 and gbb-2. Within the heterodimeric GABA receptor, only gbb-1 seems to bind agonists, while gbb-2 mediates coupling to G proteins. Ligand binding causes a conformation change that triggers signaling via guanine nucleotide-binding proteins (G proteins) and modulates the activity of down-stream effectors, such as adenylate cyclase. Signaling inhibits adenylate cyclase, stimulates phospholipase A2, activates potassium channels, inactivates voltage-dependent calcium-channels and modulates inositol phospholipid hydrolysis. Calcium is required for high affinity binding to GABA. Plays a critical role in the fine-tuning of inhibitory synaptic transmission. Pre-synaptic GABA receptor inhibits neurotransmitter release by down-regulating high-voltage activated calcium channels, whereas postsynaptic GABA receptor decreases neuronal excitability by activating a prominent inwardly rectifying potassium (Kir) conductance that underlies the late inhibitory postsynaptic potentials. Along with gbb-2, may couple to the G(o)-alpha G-protein goa-1 to negatively regulate cholinergic receptor activity in the presence of high levels of acetylcholine in ventral cord motor neurons. As acetylcholine depolarizes body wall muscles, modulation of acetylcholine levels most likely results in the control of locomotory behavior. Acts in neurons to regulate lifespan, and this may be through G-protein-egl-8/PLC-beta signaling to the transcription factor daf-16/FOXO. The polypeptide is Gamma-aminobutyric acid type B receptor subunit 1 (Caenorhabditis elegans).